A 415-amino-acid chain; its full sequence is Alpha-1,3/1,6-mannosyltransferase ALG2 (415 aa).

At 1–84 (MAENLYRARS…LPRSLGWGGR (84 aa)) the chain is on the cytoplasmic side. Positions 85 to 105 (GAAICSYVRMVFLALYVLFLS) form an intramembrane region, helical. Residues 106 to 415 (GEEFDVVVCD…QLYQYVTKLV (310 aa)) are Cytoplasmic-facing.

It belongs to the glycosyltransferase group 1 family. Glycosyltransferase 4 subfamily.

It localises to the endoplasmic reticulum membrane. The catalysed reaction is a beta-D-Man-(1-&gt;4)-beta-D-GlcNAc-(1-&gt;4)-alpha-D-GlcNAc-diphospho-di-trans,poly-cis-dolichol + GDP-alpha-D-mannose = an alpha-D-Man-(1-&gt;3)-beta-D-Man-(1-&gt;4)-beta-D-GlcNAc-(1-&gt;4)-alpha-D-GlcNAc-diphospho-di-trans,poly-cis-dolichol + GDP + H(+). It carries out the reaction an alpha-D-Man-(1-&gt;3)-beta-D-Man-(1-&gt;4)-beta-D-GlcNAc-(1-&gt;4)-alpha-D-GlcNAc-diphospho-di-trans,poly-cis-dolichol + GDP-alpha-D-mannose = an alpha-D-Man-(1-&gt;3)-[alpha-D-Man-(1-&gt;6)]-beta-D-Man-(1-&gt;4)-beta-D-GlcNAc-(1-&gt;4)-alpha-D-GlcNAc-diphospho-di-trans,poly-cis-dolichol + GDP + H(+). It catalyses the reaction a beta-D-Man-(1-&gt;4)-beta-D-GlcNAc-(1-&gt;4)-alpha-D-GlcNAc-diphospho-di-trans,poly-cis-dolichol + GDP-alpha-D-mannose = an alpha-D-Man-(1-&gt;6)-beta-D-Man-(1-&gt;4)-beta-D-GlcNAc-(1-&gt;4)-alpha-D-GlcNAc-diphospho-di-trans,poly-cis-dolichol + GDP + H(+). The enzyme catalyses an alpha-D-Man-(1-&gt;6)-beta-D-Man-(1-&gt;4)-beta-D-GlcNAc-(1-&gt;4)-alpha-D-GlcNAc-diphospho-di-trans,poly-cis-dolichol + GDP-alpha-D-mannose = an alpha-D-Man-(1-&gt;3)-[alpha-D-Man-(1-&gt;6)]-beta-D-Man-(1-&gt;4)-beta-D-GlcNAc-(1-&gt;4)-alpha-D-GlcNAc-diphospho-di-trans,poly-cis-dolichol + GDP + H(+). It functions in the pathway protein modification; protein glycosylation. Mannosyltransferase that operates in the biosynthetic pathway of dolichol-linked oligosaccharides, the glycan precursors employed in protein asparagine (N)-glycosylation. The assembly of dolichol-linked oligosaccharides begins on the cytosolic side of the endoplasmic reticulum membrane and finishes in its lumen. The sequential addition of sugars to dolichol pyrophosphate produces dolichol-linked oligosaccharides containing fourteen sugars, including two GlcNAcs, nine mannoses and three glucoses. Once assembled, the oligosaccharide is transferred from the lipid to nascent proteins by oligosaccharyltransferases. Catalyzes, on the cytoplasmic face of the endoplasmic reticulum, the addition of the second and third mannose residues to the dolichol-linked oligosaccharide chain, to produce Man3GlcNAc(2)-PP-dolichol core oligosaccharide. Man3GlcNAc(2)-PP-dolichol is a substrate for ALG11, the following enzyme in the biosynthetic pathway. While both alpha 1,3 and alpha 1,6 linkages are possible, the sequential addition of alpha 1,3 followed by alpha 1,6 is probably the preferred route. The polypeptide is Alpha-1,3/1,6-mannosyltransferase ALG2 (Alg2) (Mus musculus (Mouse)).